The following is a 273-amino-acid chain: Putative pyruvate, phosphate dikinase regulatory protein (273 aa).

153–160 (GISRTSKT) provides a ligand contact to ADP.

This sequence belongs to the pyruvate, phosphate/water dikinase regulatory protein family. PDRP subfamily.

It carries out the reaction N(tele)-phospho-L-histidyl/L-threonyl-[pyruvate, phosphate dikinase] + ADP = N(tele)-phospho-L-histidyl/O-phospho-L-threonyl-[pyruvate, phosphate dikinase] + AMP + H(+). It catalyses the reaction N(tele)-phospho-L-histidyl/O-phospho-L-threonyl-[pyruvate, phosphate dikinase] + phosphate + H(+) = N(tele)-phospho-L-histidyl/L-threonyl-[pyruvate, phosphate dikinase] + diphosphate. In terms of biological role, bifunctional serine/threonine kinase and phosphorylase involved in the regulation of the pyruvate, phosphate dikinase (PPDK) by catalyzing its phosphorylation/dephosphorylation. In Rhizobium etli (strain ATCC 51251 / DSM 11541 / JCM 21823 / NBRC 15573 / CFN 42), this protein is Putative pyruvate, phosphate dikinase regulatory protein.